The primary structure comprises 367 residues: Inositol-3-phosphate synthase (367 aa).

NAD(+) is bound by residues Asp78, Ala137, Tyr157, Ser200, Asp235, and Lys248.

It belongs to the myo-inositol 1-phosphate synthase family. It depends on NAD(+) as a cofactor.

The enzyme catalyses D-glucose 6-phosphate = 1D-myo-inositol 3-phosphate. In terms of biological role, key enzyme in myo-inositol biosynthesis pathway that catalyzes the conversion of glucose 6-phosphate to 1D-myo-inositol 3-phosphate in a NAD-dependent manner. This is Inositol-3-phosphate synthase (ino1) from Mycobacterium tuberculosis (strain CDC 1551 / Oshkosh).